A 137-amino-acid polypeptide reads, in one-letter code: Basic phospholipase A2 homolog Cax-K49 (137 aa).

Positions 1-16 are cleaved as a signal peptide; sequence MRTFWIVAMLLVGVEG. Disulfide bonds link Cys42–Cys131, Cys44–Cys60, Cys59–Cys111, Cys65–Cys137, Cys66–Cys104, Cys73–Cys97, and Cys91–Cys102. The important for membrane-damaging activities in eukaryotes and bacteria; heparin-binding stretch occupies residues 121–133; that stretch reads KKYKIYPKFLCKK.

As to quaternary structure, homodimer; non-covalently linked. As to expression, expressed by the venom gland.

Its subcellular location is the secreted. Functionally, snake venom phospholipase A2 homolog that lacks enzymatic activity. Displays edema-inducing activities and may be myotoxic. A model of myotoxic mechanism has been proposed: an apo Lys49-PLA2 is activated by the entrance of a hydrophobic molecule (e.g. fatty acid) at the hydrophobic channel of the protein leading to a reorientation of a monomer. This reorientation causes a transition between 'inactive' to 'active' states, causing alignment of C-terminal and membrane-docking sites (MDoS) side-by-side and putting the membrane-disruption sites (MDiS) in the same plane, exposed to solvent and in a symmetric position for both monomers. The MDoS region stabilizes the toxin on membrane by the interaction of charged residues with phospholipid head groups. Subsequently, the MDiS region destabilizes the membrane with penetration of hydrophobic residues. This insertion causes a disorganization of the membrane, allowing an uncontrolled influx of ions (i.e. calcium and sodium), and eventually triggering irreversible intracellular alterations and cell death. The sequence is that of Basic phospholipase A2 homolog Cax-K49 from Crotalus atrox (Western diamondback rattlesnake).